Here is a 508-residue protein sequence, read N- to C-terminus: Photosystem II CP47 reaction center protein (508 aa).

The next 6 membrane-spanning stretches (helical) occupy residues 21 to 36 (AVHL…WAGS), 101 to 115 (ITLS…IWHW), 140 to 156 (GIHL…FGAF), 203 to 218 (IAAG…FHLS), 237 to 252 (VLSS…AFVV), and 457 to 472 (TFAL…HGAR).

It belongs to the PsbB/PsbC family. PsbB subfamily. In terms of assembly, PSII is composed of 1 copy each of membrane proteins PsbA, PsbB, PsbC, PsbD, PsbE, PsbF, PsbH, PsbI, PsbJ, PsbK, PsbL, PsbM, PsbT, PsbX, PsbY, PsbZ, Psb30/Ycf12, at least 3 peripheral proteins of the oxygen-evolving complex and a large number of cofactors. It forms dimeric complexes. Requires Binds multiple chlorophylls. PSII binds additional chlorophylls, carotenoids and specific lipids. as cofactor.

It localises to the plastid. Its subcellular location is the chloroplast thylakoid membrane. One of the components of the core complex of photosystem II (PSII). It binds chlorophyll and helps catalyze the primary light-induced photochemical processes of PSII. PSII is a light-driven water:plastoquinone oxidoreductase, using light energy to abstract electrons from H(2)O, generating O(2) and a proton gradient subsequently used for ATP formation. This chain is Photosystem II CP47 reaction center protein, found in Psilotum nudum (Whisk fern).